The sequence spans 180 residues: MTERLKVVFQEKIAPKLIEKNRYKNKHQVPVIEKIVINRGLGNASQNTKILESSLNELTLIAGQRGVLTRSKKAIAAFKLREKTPVGVAVTLRGDRMYAFLDRLINLALPRIRDFQGINPKSFDGLGNYSLGLEEQLMFPEIDYDKIDQIRGMDISIITTAKKDSEGFQILKEFGMPFKE.

This sequence belongs to the universal ribosomal protein uL5 family. In terms of assembly, part of the 50S ribosomal subunit; contacts the 5S rRNA.

Its subcellular location is the plastid. The protein resides in the chloroplast. Functionally, binds 5S rRNA, forms part of the central protuberance of the 50S subunit. In Tupiella akineta (Green alga), this protein is Large ribosomal subunit protein uL5c (rpl5).